Reading from the N-terminus, the 278-residue chain is Pantothenate synthetase (278 aa).

26–33 is a binding site for ATP; the sequence is MGNLHEGH. His-33 serves as the catalytic Proton donor. A (R)-pantoate-binding site is contributed by Gln-57. Position 57 (Gln-57) interacts with beta-alanine. 144–147 contacts ATP; the sequence is GKKD. Gln-150 contributes to the (R)-pantoate binding site. Residues Gly-173 and 181-184 each bind ATP; that span reads LSSR.

It belongs to the pantothenate synthetase family. In terms of assembly, homodimer.

Its subcellular location is the cytoplasm. The catalysed reaction is (R)-pantoate + beta-alanine + ATP = (R)-pantothenate + AMP + diphosphate + H(+). Its pathway is cofactor biosynthesis; (R)-pantothenate biosynthesis; (R)-pantothenate from (R)-pantoate and beta-alanine: step 1/1. In terms of biological role, catalyzes the condensation of pantoate with beta-alanine in an ATP-dependent reaction via a pantoyl-adenylate intermediate. The protein is Pantothenate synthetase of Neisseria meningitidis serogroup A / serotype 4A (strain DSM 15465 / Z2491).